The following is a 118-amino-acid chain: Small ribosomal subunit protein uS13 (118 aa).

The tract at residues 91–118 (HRRSLPLRGQRTKNNARTRKGPKKPIKR) is disordered.

Belongs to the universal ribosomal protein uS13 family. Part of the 30S ribosomal subunit. Forms a loose heterodimer with protein S19. Forms two bridges to the 50S subunit in the 70S ribosome.

In terms of biological role, located at the top of the head of the 30S subunit, it contacts several helices of the 16S rRNA. In the 70S ribosome it contacts the 23S rRNA (bridge B1a) and protein L5 of the 50S subunit (bridge B1b), connecting the 2 subunits; these bridges are implicated in subunit movement. Contacts the tRNAs in the A and P-sites. The chain is Small ribosomal subunit protein uS13 from Hydrogenovibrio crunogenus (strain DSM 25203 / XCL-2) (Thiomicrospira crunogena).